We begin with the raw amino-acid sequence, 89 residues long: Small ribosomal subunit protein uS15 (89 aa).

Belongs to the universal ribosomal protein uS15 family. Part of the 30S ribosomal subunit. Forms a bridge to the 50S subunit in the 70S ribosome, contacting the 23S rRNA.

Functionally, one of the primary rRNA binding proteins, it binds directly to 16S rRNA where it helps nucleate assembly of the platform of the 30S subunit by binding and bridging several RNA helices of the 16S rRNA. In terms of biological role, forms an intersubunit bridge (bridge B4) with the 23S rRNA of the 50S subunit in the ribosome. The polypeptide is Small ribosomal subunit protein uS15 (Synechocystis sp. (strain ATCC 27184 / PCC 6803 / Kazusa)).